A 193-amino-acid polypeptide reads, in one-letter code: Ribosome maturation factor RimM (193 aa).

The PRC barrel domain maps to 100 to 173 (DDEFYYADLE…TLLIDPLAAG (74 aa)).

It belongs to the RimM family. As to quaternary structure, binds ribosomal protein uS19.

The protein localises to the cytoplasm. In terms of biological role, an accessory protein needed during the final step in the assembly of 30S ribosomal subunit, possibly for assembly of the head region. Essential for efficient processing of 16S rRNA. May be needed both before and after RbfA during the maturation of 16S rRNA. It has affinity for free ribosomal 30S subunits but not for 70S ribosomes. This chain is Ribosome maturation factor RimM, found in Rhizobium etli (strain CIAT 652).